A 368-amino-acid polypeptide reads, in one-letter code: DNA replication and repair protein RecF (368 aa).

An ATP-binding site is contributed by 30–37 (GKNGTGKT).

Belongs to the RecF family.

It is found in the cytoplasm. Functionally, the RecF protein is involved in DNA metabolism; it is required for DNA replication and normal SOS inducibility. RecF binds preferentially to single-stranded, linear DNA. It also seems to bind ATP. This is DNA replication and repair protein RecF from Chloroherpeton thalassium (strain ATCC 35110 / GB-78).